We begin with the raw amino-acid sequence, 240 residues long: tRNA pseudouridine synthase A (240 aa).

Aspartate 50 acts as the Nucleophile in catalysis. Tyrosine 109 is a substrate binding site.

Belongs to the tRNA pseudouridine synthase TruA family. As to quaternary structure, homodimer.

It catalyses the reaction uridine(38/39/40) in tRNA = pseudouridine(38/39/40) in tRNA. Formation of pseudouridine at positions 38, 39 and 40 in the anticodon stem and loop of transfer RNAs. This is tRNA pseudouridine synthase A from Campylobacter jejuni (strain RM1221).